A 235-amino-acid chain; its full sequence is Large ribosomal subunit protein uL1 (235 aa).

The protein belongs to the universal ribosomal protein uL1 family. As to quaternary structure, part of the 50S ribosomal subunit.

In terms of biological role, binds directly to 23S rRNA. The L1 stalk is quite mobile in the ribosome, and is involved in E site tRNA release. Functionally, protein L1 is also a translational repressor protein, it controls the translation of the L11 operon by binding to its mRNA. This Prochlorococcus marinus (strain MIT 9515) protein is Large ribosomal subunit protein uL1.